The chain runs to 650 residues: Putative F-box protein R757 (650 aa).

Positions 7 to 53 (FSVMESLPTELAYHVLSFIDFNSVVTYRLCSQESNNFIKSMLVFFPI) constitute an F-box domain.

The polypeptide is Putative F-box protein R757 (Acanthamoeba polyphaga mimivirus (APMV)).